Reading from the N-terminus, the 309-residue chain is Dicarboxylate carrier SLC25A8 (309 aa).

The Mitochondrial intermembrane portion of the chain corresponds to Met1–Lys16. Solcar repeat units lie at residues Pro11 to Phe106, Ala114 to Ala203, and Asp212 to Ala297. The interval Lys16–Met63 is important for interaction with long-chain fatty acids. Residues Phe17 to Arg40 traverse the membrane as a helical segment. The Mitochondrial matrix portion of the chain corresponds to Leu41–Ser77. The helical transmembrane segment at Leu78 to Val103 threads the bilayer. Topologically, residues Lys104 to Arg119 are mitochondrial intermembrane. Residues Leu120–Gln145 form a helical membrane-spanning segment. The Mitochondrial matrix portion of the chain corresponds to Ala146–Arg173. Residues Gly174–Leu199 form a helical membrane-spanning segment. At Ile200 to His217 the chain is on the mitochondrial intermembrane side. A helical transmembrane segment spans residues Phe218–Tyr242. Residues Met243–Ala268 lie on the Mitochondrial matrix side of the membrane. A helical transmembrane segment spans residues Phe269–Leu294. The interval Leu278–Val285 is important for interaction with long-chain fatty acids. At Lys295–Phe309 the chain is on the mitochondrial intermembrane side.

The protein belongs to the mitochondrial carrier (TC 2.A.29) family. As to quaternary structure, homotetramer. Adopts an asymmetrical dimer of dimers functional form. In terms of tissue distribution, widely expressed in adult human tissues, including tissues rich in macrophages. Most expressed in white adipose tissue and skeletal muscle.

It localises to the mitochondrion inner membrane. It catalyses the reaction L-aspartate(out) + phosphate(in) + H(+)(in) = L-aspartate(in) + phosphate(out) + H(+)(out). The enzyme catalyses oxaloacetate(out) + phosphate(in) + H(+)(in) = oxaloacetate(in) + phosphate(out) + H(+)(out). It carries out the reaction (S)-malate(out) + phosphate(in) + H(+)(in) = (S)-malate(in) + phosphate(out) + H(+)(out). The catalysed reaction is malonate(out) + phosphate(in) + H(+)(in) = malonate(in) + phosphate(out) + H(+)(out). It catalyses the reaction sulfate(out) + phosphate(in) + H(+)(in) = sulfate(in) + phosphate(out) + H(+)(out). The enzyme catalyses (S)-malate(out) = (S)-malate(in). It carries out the reaction L-aspartate(out) = L-aspartate(in). The catalysed reaction is phosphate(in) = phosphate(out). It catalyses the reaction chloride(in) = chloride(out). The enzyme catalyses H(+)(in) = H(+)(out). It carries out the reaction a long-chain fatty acid(out) = a long-chain fatty acid(in). Its activity is regulated as follows. Inhibited by pyridoxal- 5'-phosphate, bathophenanthroline, tannic acid, bromocresol purple, butylmalonate and phenylsuccinate. Proton conductance is activated by cardiolipin and long-chain free fatty acids and inhibited by purine nucleotides ATP and ADP. Chloride ion transporter activity is inhibited by long-chain free fatty acids. Functionally, antiporter that exports dicarboxylate intermediates of the Krebs cycle in exchange for phosphate plus a proton across the inner membrane of mitochondria, a process driven by mitochondrial motive force with an overall impact on glycolysis, glutaminolysis and glutathione-dependent redox balance. Continuous export of oxaloacetate and related four-carbon dicarboxylates from mitochondrial matrix into the cytosol negatively regulates the oxidation of acetyl-CoA substrates via the Krebs cycle, lowering the ATP/ADP ratio and reactive oxygen species (ROS) production. May mediate inducible proton entry into the mitochondrial matrix affecting ATP turnover as a protection mechanism against oxidative stress. The proton currents are most likely associated with fatty acid flipping across the inner membrane of mitochondria in a metabolic process regulated by free fatty acids and purine nucleotides. Regulates the use of glucose as a source of energy. Required for glucose-induced DRP1-dependent mitochondrial fission and neuron activation in the ventromedial nucleus of the hypothalamus (VMH). This mitochondrial adaptation mechanism modulates the VMH pool of glucose-excited neurons with an impact on systemic glucose homeostasis. Regulates ROS levels and metabolic reprogramming of macrophages during the resolution phase of inflammation. Attenuates ROS production in response to IL33 to preserve the integrity of the Krebs cycle required for persistent production of itaconate and subsequent GATA3-dependent differentiation of inflammation-resolving alternatively activated macrophages. Can unidirectionally transport anions including L-malate, L-aspartate, phosphate and chloride ions. Does not mediate adaptive thermogenesis. This Homo sapiens (Human) protein is Dicarboxylate carrier SLC25A8 (UCP2).